A 273-amino-acid chain; its full sequence is Dermonecrotic toxin LamSicTox-alphaIC1 (273 aa).

Histidine 5 is an active-site residue. Mg(2+) contacts are provided by glutamate 25 and aspartate 27. Histidine 41 acts as the Nucleophile in catalysis. Cystine bridges form between cysteine 45–cysteine 51 and cysteine 47–cysteine 190. Aspartate 85 lines the Mg(2+) pocket.

It belongs to the arthropod phospholipase D family. Class II subfamily. It depends on Mg(2+) as a cofactor. As to expression, expressed by the venom gland.

The protein resides in the secreted. The catalysed reaction is an N-(acyl)-sphingosylphosphocholine = an N-(acyl)-sphingosyl-1,3-cyclic phosphate + choline. It catalyses the reaction an N-(acyl)-sphingosylphosphoethanolamine = an N-(acyl)-sphingosyl-1,3-cyclic phosphate + ethanolamine. The enzyme catalyses a 1-acyl-sn-glycero-3-phosphocholine = a 1-acyl-sn-glycero-2,3-cyclic phosphate + choline. It carries out the reaction a 1-acyl-sn-glycero-3-phosphoethanolamine = a 1-acyl-sn-glycero-2,3-cyclic phosphate + ethanolamine. Functionally, dermonecrotic toxins cleave the phosphodiester linkage between the phosphate and headgroup of certain phospholipids (sphingolipid and lysolipid substrates), forming an alcohol (often choline) and a cyclic phosphate. This toxin acts on sphingomyelin (SM). It may also act on ceramide phosphoethanolamine (CPE), lysophosphatidylcholine (LPC) and lysophosphatidylethanolamine (LPE), but not on lysophosphatidylserine (LPS), and lysophosphatidylglycerol (LPG). It acts by transphosphatidylation, releasing exclusively cyclic phosphate products as second products. Induces dermonecrosis, hemolysis, increased vascular permeability, edema, inflammatory response, and platelet aggregation. This Loxosceles amazonica (Recluse spider) protein is Dermonecrotic toxin LamSicTox-alphaIC1.